The chain runs to 230 residues: Heptaprenylglyceryl phosphate synthase (230 aa).

Residue Lys12 participates in sn-glycerol 1-phosphate binding. 2 residues coordinate Mg(2+): Asp14 and Thr40. Sn-glycerol 1-phosphate contacts are provided by residues 159–164 (YIEYSG), Gly189, and 209–210 (GD).

This sequence belongs to the GGGP/HepGP synthase family. Group I subfamily. As to quaternary structure, homodimer. Mg(2+) serves as cofactor.

It catalyses the reaction sn-glycerol 1-phosphate + all-trans-heptaprenyl diphosphate = 3-heptaprenyl-sn-glycero-1-phosphate + diphosphate. It participates in membrane lipid metabolism; glycerophospholipid metabolism. Prenyltransferase that catalyzes in vivo the transfer of the heptaprenyl moiety of heptaprenyl pyrophosphate (HepPP; 35 carbon atoms) to the C3 hydroxyl of sn-glycerol-1-phosphate (G1P), producing heptaprenylglyceryl phosphate (HepGP). This reaction is an ether-bond-formation step in the biosynthesis of archaea-type G1P-based membrane lipids found in Bacillales. To a much lesser extent, is also able to use geranylgeranyl diphosphate (GGPP; C20) as the prenyl donor. In Staphylococcus aureus (strain NCTC 8325 / PS 47), this protein is Heptaprenylglyceryl phosphate synthase.